The chain runs to 341 residues: MNEGYIIAGLLLLTAGMIDFLWTTLWLESGAGPITRCLSAWLWKGCRKISGDHAKVLSMAGPLLLCLTLVIWISLFWSGWVLIYSSDPHSLMETQSKEPASWSDRIYFSGYVMFTLGNGDLAPNGGLWKLVTIIETAQGLLTITFSVTYLISVLSAVNQKRSFAQSVLSLGHDGTEIVHNAWNGKDFHDIDFLLVAASSELGKLTAQHNAFPILHFYHSTQHQESSIIAVAVLDEALTIFKYGIPEQYQPNQLHIKEARSSIKNYLDTVHTAYIHPAEQAPPEPDISKLQQSGIPALSKQTFQIAVNSIKERRQLLLGIIQAGARKWPVQEQAIGNAYSPK.

The next 3 membrane-spanning stretches (helical) occupy residues 6–26 (IIAG…TTLW), 63–83 (LLLC…WVLI), and 137–157 (AQGL…LSAV).

The protein localises to the cell membrane. This is an uncharacterized protein from Bacillus subtilis (strain 168).